Here is a 267-residue protein sequence, read N- to C-terminus: Membrane-associated protein Vipp1 (267 aa).

Residues 26 to 156 are a coiled coil; the sequence is EKVLEQAVID…KANAELQQTL (131 aa). The tract at residues 224-252 is disordered; it reads GTSAATPQLEAAPVDSSVPANNASQDDAV.

This sequence belongs to the PspA/Vipp/IM30 family.

The protein localises to the cell inner membrane. Required for thylakoid formation. This is Membrane-associated protein Vipp1 from Synechocystis sp. (strain ATCC 27184 / PCC 6803 / Kazusa).